The chain runs to 118 residues: Putative pterin-4-alpha-carbinolamine dehydratase (118 aa).

The protein belongs to the pterin-4-alpha-carbinolamine dehydratase family.

It catalyses the reaction (4aS,6R)-4a-hydroxy-L-erythro-5,6,7,8-tetrahydrobiopterin = (6R)-L-erythro-6,7-dihydrobiopterin + H2O. The chain is Putative pterin-4-alpha-carbinolamine dehydratase from Xanthomonas campestris pv. campestris (strain 8004).